The sequence spans 410 residues: MVLSQRQRDELNRAIADYLRSNGYEEAYSTFKKEAELDMNEELDKKYAGLLEKKWTSVIRLQKKVMELESKLNEAKEEITLGGPVAQKRDPKEWIPRPPERYALSGHRSPVTRVIFHPVFSVMVTSSEDATIKVWDYEAGDFERTLKGHTDSVQDISFDQTGKLLASCSADMTIKLWDFQGFECIRTMHGHDHNVSSVAIMPNGDHIVSASRDKTIKMWEVATGYCVKTFTGHREWVRMVRPNQDGSLIASCSNDQTVRVWVATSKECKAELREHEHVVECIAWAPDTAHPTILEATSSESKKNGKSGPFLLSGSRDKTIKMWDISTGMCLMTLVGHDNWVRGVLVHPGGRFIVSCADDKTLRIWDYKNKRCMKTLCAHEHFVTSLDMHQTAPYVVTGSVDQTVKVWECR.

The LisH domain maps to 7-39; the sequence is QRDELNRAIADYLRSNGYEEAYSTFKKEAELDM. The stretch at 56 to 82 forms a coiled coil; it reads TSVIRLQKKVMELESKLNEAKEEITLG. WD repeat units follow at residues 106–147, 148–187, 190–229, 232–271, 274–333, 336–375, and 378–410; these read GHRS…RTLK, GHTD…CIRT, GHDH…CVKT, GHRE…CKAE, EHEH…CLMT, GHDN…CMKT, and AHEH…WECR.

Belongs to the WD repeat LIS1/nudF family. Can self-associate. Component of the cytosolic PAF-AH (I) heterotetrameric enzyme, which is composed of PAFAH1B1 (beta), PAFAH1B2 (alpha2) and PAFAH1B3 (alpha1) subunits. The catalytic activity of the enzyme resides in the alpha1 (PAFAH1B3) and alpha2 (PAFAH1B2) subunits, whereas the beta subunit (PAFAH1B1) has regulatory activity. Trimer formation is not essential for the catalytic activity. Interacts with dynein, dynactin, nde1 and ndel1.

The protein localises to the cytoplasm. The protein resides in the cytoskeleton. Its subcellular location is the microtubule organizing center. It is found in the centrosome. Its function is as follows. Regulatory subunit (beta subunit) of the cytosolic type I platelet-activating factor (PAF) acetylhydrolase (PAF-AH (I)), an enzyme that catalyzes the hydrolyze of the acetyl group at the sn-2 position of PAF and its analogs and participates in PAF inactivation. Regulates the PAF-AH (I) activity in a catalytic dimer composition-dependent manner. Positively regulates the activity of the minus-end directed microtubule motor protein dynein. May enhance dynein-mediated microtubule sliding by targeting dynein to the microtubule plus end. Required for several dynein- and microtubule-dependent processes such as the maintenance of Golgi integrity, the peripheral transport of microtubule fragments and the coupling of the nucleus and centrosome. May be required for proliferation of neuronal precursors and neuronal migration. The protein is Lissencephaly-1 homolog B (pafah1b1-2) of Salmo salar (Atlantic salmon).